The chain runs to 921 residues: Glutamate receptor 3.7 (921 aa).

A signal peptide spans 1–25; the sequence is MGLGIDPSVAITALIVVILVVPMDC. At 26-580 the chain is on the extracellular side; that stretch reads QRPQLVNIGA…WIFLRPFTSR (555 aa). Residues Asn-214, Asn-300, Asn-330, Asn-369, Asn-396, Asn-478, and Asn-568 are each glycosylated (N-linked (GlcNAc...) asparagine). A helical membrane pass occupies residues 581-601; sequence LWCVVLVSFLVIAVVIWILEH. Residues 602–608 lie on the Cytoplasmic side of the membrane; it reads RINEDFR. The chain crosses the membrane as a helical span at residues 609-629; sequence GPPRRQLSTMLLFSFSTLFKR. Residues 630 to 640 are Cytoplasmic-facing; the sequence is NQEDTISNLAR. Residues 641-661 traverse the membrane as a helical segment; sequence LVMIVWLFLLMVLTASYTANL. Topologically, residues 662–822 are extracellular; that stretch reads TSILTVQQLP…PEPNQLHLKS (161 aa). The chain crosses the membrane as a helical span at residues 823–843; the sequence is FKGLYLVCIAITVSAFLVFVL. Over 844–921 the chain is Cytoplasmic; sequence RMIRQFVRYR…VQADTEVPRN (78 aa). Residues 896–921 are disordered; it reads FRRSDDSNNNPSHVGEVQADTEVPRN.

The protein belongs to the glutamate-gated ion channel (TC 1.A.10.1) family. May form heteromers. In terms of tissue distribution, expressed predominantly in leaves and siliques. Also detected in roots.

It is found in the membrane. In terms of biological role, glutamate-gated receptor that probably acts as a non-selective cation channel. May be involved in light-signal transduction and calcium homeostasis via the regulation of calcium influx into cells. This is Glutamate receptor 3.7 (GLR3.7) from Arabidopsis thaliana (Mouse-ear cress).